The following is a 73-amino-acid chain: UPF0154 protein BcerKBAB4_3367 (73 aa).

Residues 4–24 (WLGILVGVVALVAGVALGFFI) traverse the membrane as a helical segment.

Belongs to the UPF0154 family.

The protein localises to the cell membrane. The protein is UPF0154 protein BcerKBAB4_3367 of Bacillus mycoides (strain KBAB4) (Bacillus weihenstephanensis).